Reading from the N-terminus, the 139-residue chain is Trafficking protein particle complex subunit 2-like protein (139 aa).

It belongs to the TRAPP small subunits family. Sedlin subfamily.

It is found in the cytoplasm. It localises to the perinuclear region. The protein resides in the endoplasmic reticulum. The protein localises to the golgi apparatus. In terms of biological role, may play a role in vesicular transport from endoplasmic reticulum to Golgi. The protein is Trafficking protein particle complex subunit 2-like protein (TRAPPC2L) of Taeniopygia guttata (Zebra finch).